Reading from the N-terminus, the 552-residue chain is MDNMSITNTPTSNDACLSIVHSLMCHRQGGESETFAKRAIESLVKKLKEKKDELDSLITAITTNGAHPSKCVTIQRTLDGRLQVAGRKGFPHVIYARLWRWPDLHKNELKHVKYCQYAFDLKCDSVCVNPYHYERVVSPGIDLSGLTLQSNAPSSMMVKDEYVHDFEGQPSLSTEGHSIQTIQHPPSNRASTETYSTPALLAPSESNATSTANFPNIPVASTSQPASILGGSHSEGLLQIASGPQPGQQQNGFTGQPATYHHNSTTTWTGSRTAPYTPNLPHHQNGHLQHHPPMPPHPGHYWPVHNELAFQPPISNHPAPEYWCSIAYFEMDVQVGETFKVPSSCPIVTVDGYVDPSGGDRFCLGQLSNVHRTEAIERARLHIGKGVQLECKGEGDVWVRCLSDHAVFVQSYYLDREAGRAPGDAVHKIYPSAYIKVFDLRQCHRQMQQQAATAQAAAAAQAAAVAGNIPGPGSVGGIAPAISLSAAAGIGVDDLRRLCILRMSFVKGWGPDYPRQSIKETPCWIEIHLHRALQLLDEVLHTMPIADPQPLD.

Positions 1-322 are mediates interaction with ZBTB7A; sequence MDNMSITNTP…PISNHPAPEY (322 aa). The MH1 domain occupies 18-142; the sequence is SIVHSLMCHR…YERVVSPGID (125 aa). N6-acetyllysine is present on lysine 37. Residues 44–69 are required for interaction with TSC22D1; that stretch reads VKKLKEKKDELDSLITAITTNGAHPS. Cysteine 71 lines the Zn(2+) pocket. Residue lysine 113 forms a Glycyl lysine isopeptide (Lys-Gly) (interchain with G-Cter in SUMO2) linkage. Zn(2+) contacts are provided by cysteine 115, cysteine 127, and histidine 132. Disordered stretches follow at residues 168-194 and 236-256; these read GQPSLSTEGHSIQTIQHPPSNRASTET and GLLQIASGPQPGQQQNGFTGQ. Composition is skewed to polar residues over residues 170–194 and 245–256; these read PSLSTEGHSIQTIQHPPSNRASTET and QPGQQQNGFTGQ. The segment at 275 to 320 is SAD; the sequence is PYTPNLPHHQNGHLQHHPPMPPHPGHYWPVHNELAFQPPISNHPAP. The region spanning 323 to 552 is the MH2 domain; sequence WCSIAYFEMD…MPIADPQPLD (230 aa). N6-acetyllysine occurs at positions 428 and 507. Lysine 519 is covalently cross-linked (Glycyl lysine isopeptide (Lys-Gly) (interchain with G-Cter in ubiquitin)).

It belongs to the dwarfin/SMAD family. In terms of assembly, monomer; in the absence of TGF-beta activation. Heterotrimer; on TGF-beta activation. Heterotrimer composed of two molecules of a C-terminally phosphorylated R-SMAD molecule, SMAD2 or SMAD3, and one molecule of SMAD4 to form the transcriptional active SMAD2/SMAD3-SMAD4 complex. Found in a ternary complex composed of SMAD4, STK11/LKB1 and STK11IP. Found in a complex with SMAD1 and YY1. Identified in a complex that contains at least ZNF451, SMAD2, SMAD3 and SMAD4. Interacts with ATF2, COPS5, DACH1, MSG1, SKI, STK11/LKB1, STK11IP and TRIM33. Associates with ZNF423 or ZNF521 in response to BMP2 leading to activate transcription of BMP target genes. Interacts with USP9X. Interacts (via the MH1 and MH2 domains) with RBPMS. Interacts with WWTR1 (via coiled-coil domain). Interacts with CITED1 and CITED2. Interacts with PDPK1 (via PH domain). Interacts with VPS39; this interaction affects heterodimer formation with SMAD3, but not with SMAD2, and leads to inhibition of SMAD3-dependent transcription activation. Interactions with VPS39 and SMAD2 may be mutually exclusive. Interacts (via MH2 domain) with ZNF451 (via N-terminal zinc-finger domains). Interacts with ZC3H3. Interacts weakly with ZNF8. Interacts with NUP93 and IPO7; translocates SMAD4 to the nucleus through the NPC upon BMP7 stimulation resulting in activation of SMAD4 signaling. Interacts with CREB3L1, the interaction takes place upon TGFB1 induction and SMAD4 acts as a CREB3L1 coactivator to induce the expression of genes involved in the assembly of collagen extracellular matrix. Interacts with DLX1. Interacts with ZBTB7A; the interaction is direct and stimulated by TGFB1. Interacts with CREBBP; the recruitment of this transcriptional coactivator is negatively regulated by ZBTB7A. Interacts with EP300; the interaction with this transcriptional coactivator is negatively regulated by ZBTB7A. Interacts with HDAC1. Interacts (via MH2 domain) with ZMIZ1 (via SP-RING-type domain); in the TGF-beta signaling pathway increases the activity of the SMAD3/SMAD4 transcriptional complex. Interacts (via N-terminus) with TSC22D1. Phosphorylated by PDPK1. Post-translationally, monoubiquitinated on Lys-519 by E3 ubiquitin-protein ligase TRIM33. Monoubiquitination hampers its ability to form a stable complex with activated SMAD2/3 resulting in inhibition of TGF-beta/BMP signaling cascade. Deubiquitination by USP9X restores its competence to mediate TGF-beta signaling.

The protein localises to the cytoplasm. It is found in the nucleus. In muscle physiology, plays a central role in the balance between atrophy and hypertrophy. When recruited by MSTN, promotes atrophy response via phosphorylated SMAD2/4. MSTN decrease causes SMAD4 release and subsequent recruitment by the BMP pathway to promote hypertrophy via phosphorylated SMAD1/5/8. Acts synergistically with SMAD1 and YY1 in bone morphogenetic protein (BMP)-mediated cardiac-specific gene expression. Binds to SMAD binding elements (SBEs) (5'-GTCT/AGAC-3') within BMP response element (BMPRE) of cardiac activating regions. Common SMAD (co-SMAD) is the coactivator and mediator of signal transduction by TGF-beta (transforming growth factor). Component of the heterotrimeric SMAD2/SMAD3-SMAD4 complex that forms in the nucleus and is required for the TGF-mediated signaling. Promotes binding of the SMAD2/SMAD4/FAST-1 complex to DNA and provides an activation function required for SMAD1 or SMAD2 to stimulate transcription. Component of the multimeric SMAD3/SMAD4/JUN/FOS complex which forms at the AP1 promoter site; required for synergistic transcriptional activity in response to TGF-beta. May act as a tumor suppressor. Positively regulates PDPK1 kinase activity by stimulating its dissociation from the 14-3-3 protein YWHAQ which acts as a negative regulator. In Homo sapiens (Human), this protein is Mothers against decapentaplegic homolog 4 (SMAD4).